The chain runs to 638 residues: MAENGESSGPPRPSRGPAAAPGAASPPAEPKIIKVTVKTPKEKEEFAVPENSTVQQFKEAISKRFKSQTDQLVLIFAGKILKDQDTLMQHGIHDGLTVHLVIKSQNRPQGQATTQPSTTAGTSTTTTTTTTAAAPAATTSSAPRSSSTPTTTNSSSFGLGSLSSLSNLGLNSPNFTELQNQMQQQLLASPEMMIQIMENPFVQSMLSNPDLMRQLIMANPQMQQLIQRNPEISHLLNNPDIMRQTLEIARNPAMMQEMMRNQDLALSNLESIPGGYNALRRMYTDIQEPMLNAAQEQFGGNPFATVGSSSTSGEGTQPSRTENRDPLPNPWAPPPTTQTAATTTTTTTTSSGSGSGSSSSSTTAGNTMAAANYVASIFSTPGMQSLLQQITENPQLIQNMLSAPYMRSMMQSLSQNPDMAAQMMLSSPLFTSNPQLQEQMRPQLPNFLQQMQNPETIAAMSNPRAMQALMQIQQGLQTLATEAPGLIPSFAPGVGMGVLGTAITPVGPVTPIGPIGPIVPFTPIGPIGPIGPTGPASSPGSTGTGIPPATTVSSSAPTETISPTSESGPNQQFIQQMVQALTGGSPPQPPNPEVRFQQQLEQLNAMGFLNREANLQALIATGGDINAAIERLLGSQPS.

The span at 1-26 (MAENGESSGPPRPSRGPAAAPGAASP) shows a compositional bias: low complexity. Disordered regions lie at residues 1–31 (MAENGESSGPPRPSRGPAAAPGAASPPAEPK) and 107–158 (RPQG…SSFG). N-acetylalanine is present on Ala2. Ser25 is subject to Phosphoserine. Positions 33-107 (IKVTVKTPKE…VHLVIKSQNR (75 aa)) constitute a Ubiquitin-like domain. Low complexity predominate over residues 112 to 158 (ATTQPSTTAGTSTTTTTTTTAAAPAATTSSAPRSSSTPTTTNSSSFG). STI1 domains follow at residues 189 to 217 (SPEMMIQIMENPFVQSMLSNPDLMRQLIM) and 219 to 258 (NPQMQQLIQRNPEISHLLNNPDIMRQTLEIARNPAMMQEM). Residues 298 to 364 (FGGNPFATVG…SGSSSSSTTA (67 aa)) are disordered. Low complexity predominate over residues 305–316 (TVGSSSTSGEGT). Residues 327–336 (LPNPWAPPPT) are compositionally biased toward pro residues. The segment covering 337-364 (TQTAATTTTTTTTSSGSGSGSSSSSTTA) has biased composition (low complexity). 2 STI1 domains span residues 393-440 (NPQL…QEQM) and 444-476 (LPNFLQQMQNPETIAAMSNPRAMQALMQIQQGL). 11 consecutive repeat copies span residues 505–507 (PVG), 508–510 (PVT), 511–513 (PIG), 514–516 (PIG), 517–519 (PIV), 520–522 (PFT), 523–525 (PIG), 526–528 (PIG), 529–531 (PIG), 532–533 (PT), and 535–537 (PAS). The tract at residues 505–537 (PVGPVTPIGPIGPIVPFTPIGPIGPIGPTGPAS) is 11 X 3 AA tandem repeats P-X-X. The disordered stretch occupies residues 528-570 (GPIGPTGPASSPGSTGTGIPPATTVSSSAPTETISPTSESGPN). Residues 533-551 (TGPASSPGSTGTGIPPATT) show a composition bias toward low complexity. Residues 552–570 (VSSSAPTETISPTSESGPN) are compositionally biased toward polar residues. In terms of domain architecture, UBA spans 589–635 (PPNPEVRFQQQLEQLNAMGFLNREANLQALIATGGDINAAIERLLGS).

In terms of assembly, homodimer. Forms heterodimer with UBQLN1. Binds UBE3A and BTRC. Interacts with the 19S proteasome subunit. Interacts with C9orf72. Binds CD47. Interacts with HNRNPA1 and HNRNPU. Found in a complex with UBQLN1 and MAP1LC3A/B/C. Interacts with EPS15, EPN1 and EPN2. Interacts with HERPUD1. Interacts with RAD23A. Interacts with TARDBP. Interacts (via C-terminus) with FAF2 (via N-terminus). Interacts with UBQLN4. Post-translationally, degraded during macroautophagy. In terms of tissue distribution, highly expressed in smooth muscle. Expression in other tissues is very low.

The protein localises to the cytoplasm. It localises to the nucleus. It is found in the membrane. Its subcellular location is the cytoplasmic vesicle. The protein resides in the autophagosome. In terms of biological role, plays an important role in the regulation of different protein degradation mechanisms and pathways including ubiquitin-proteasome system (UPS), autophagy and the endoplasmic reticulum-associated protein degradation (ERAD) pathway. Mediates the proteasomal targeting of misfolded or accumulated proteins for degradation by binding (via UBA domain) to their polyubiquitin chains and by interacting (via ubiquitin-like domain) with the subunits of the proteasome. Plays a role in the ERAD pathway via its interaction with ER-localized proteins FAF2/UBXD8 and HERPUD1 and may form a link between the polyubiquitinated ERAD substrates and the proteasome. Involved in the regulation of macroautophagy and autophagosome formation; required for maturation of autophagy-related protein LC3 from the cytosolic form LC3-I to the membrane-bound form LC3-II and may assist in the maturation of autophagosomes to autolysosomes by mediating autophagosome-lysosome fusion. Negatively regulates the endocytosis of GPCR receptors: AVPR2 and ADRB2, by specifically reducing the rate at which receptor-arrestin complexes concentrate in clathrin-coated pits (CCPs). Links CD47 to vimentin-containing intermediate filaments of the cytoskeleton. The polypeptide is Ubiquilin-2 (Ubqln2) (Mus musculus (Mouse)).